Consider the following 422-residue polypeptide: Mannosylglycerate synthase (422 aa).

Residues 7–11 (PFKEE), Gln66, Lys77, Asp101, and 101–102 (DS) contribute to the GDP-alpha-D-mannose site. (R)-glycerate-binding positions include Arg132 and 137–140 (AMIT). 3 residues coordinate GDP-alpha-D-mannose: Leu164, Asp193, and Tyr221.

It belongs to the glycosyltransferase 78 family.

The enzyme catalyses (R)-glycerate + GDP-alpha-D-mannose = (2R)-2-O-(alpha-D-mannosyl)-glycerate + GDP + H(+). It carries out the reaction GDP-alpha-D-glucose + (R)-glycerate = (2R)-2-O-(alpha-D-glucopyranosyl)-glycerate + GDP + H(+). With respect to regulation, activity is not dependent on divalent cations, but it is enhanced by Mg(2+). Its function is as follows. Involved in the biosynthesis of the compatible solute alpha-D-mannosyl-glycerate (MG). Catalyzes the condensation of GDP-alpha-D-mannose (GDP-Man) with D-glycerate to produce alpha-D-mannosyl-glycerate. Can also use GDP-alpha-D-glucose (GDP-Glc) as sugar donor to produce alpha-D-glucopyranosyl-glycerate (GG). This is Mannosylglycerate synthase from Selaginella moellendorffii (Spikemoss).